The following is a 1349-amino-acid chain: Elongator complex protein 1 (1349 aa).

5 positions are modified to phosphoserine: Ser529, Ser539, Ser551, Ser636, and Ser828. Residues 919–1349 (QDVNVVYKSA…DFPKSHIVDF (431 aa)) form a mediates dimerization region. Residues Ser1198 and Ser1202 each carry the phosphoserine; by HRR25 modification. Phosphoserine occurs at positions 1205 and 1209. The span at 1214-1228 (YTGKTGGTAKTGASR) shows a compositional bias: low complexity. Residues 1214–1245 (YTGKTGGTAKTGASRRTAKNKRREERKRARGK) are disordered. A required for binding to tRNA region spans residues 1228 to 1246 (RRTAKNKRREERKRARGKK).

It belongs to the ELP1/IKA1 family. In terms of assembly, homodimer; dimerization promotes ELP1/IKI3 stability and elongator complex formation. Component of the elongator complex which consists of ELP1/IKI3, ELP2, ELP3, ELP4, ELP5/IKI1 and ELP6. The elongator complex is composed of two copies of the Elp123 subcomplex (composed of ELP1/IKI3, ELP2 and ELP3) and two copies of the Elp456 subcomplex (composed of ELP4, ELP5/IKI1 and ELP6). The Elp123 subcomplex forms a two-lobed scaffold, which binds the Elp456 subcomplex asymmetrically. In the complex, ELP1/IKI3 interacts with ELP2. In each lobe, ELP2 is tightly sandwiched between ELP1/IKI3 and ELP3. The Elp123 subcomplex binds tRNA through ELP1/IKI3 and ELP3 and can bind 2 tRNAs simultaneously. tRNA-binding induces conformational rearrangements which precisely position the targeted anticodon base in the active site. The Elp456 subcomplex binds tRNA and has ATPase activity. ELP1/IKI3 interacts with HRR25 and KTI12. Interacts with KTI11/DPH3. In terms of processing, phosphorylation promotes the tRNA modification function of the elongator complex.

It is found in the cytoplasm. It localises to the nucleus. It participates in tRNA modification; 5-methoxycarbonylmethyl-2-thiouridine-tRNA biosynthesis. Its function is as follows. Component of the elongator complex which is required for multiple tRNA modifications, including mcm5U (5-methoxycarbonylmethyl uridine), mcm5s2U (5-methoxycarbonylmethyl-2-thiouridine), and ncm5U (5-carbamoylmethyl uridine). The elongator complex catalyzes formation of carboxymethyluridine in the wobble base at position 34 in tRNAs. Functions as a gamma-toxin target (TOT); disruption of the complex confers resistance to Kluyveromyces lactis toxin zymocin (pGKL1 killer toxin). May also be involved in sensitivity to Pichia inositovora toxin. ELP1/IKI3 binds to tRNA, mediating interaction of the elongator complex with tRNA. Independently, may be involved in polarized exocytosis. The sequence is that of Elongator complex protein 1 (IKI3) from Saccharomyces cerevisiae (strain ATCC 204508 / S288c) (Baker's yeast).